Consider the following 1239-residue polypeptide: DNA polymerase subunit gamma-1 (1239 aa).

Positions methionine 1 to glutamine 68 are disordered. Low complexity-rich tracts occupy residues valine 9–serine 36 and glutamine 44–glutamine 60. Residues glutamine 43–glutamine 55 form a does not contribute to polymerase and exonuclease enzymatic activities region. The short motif at valine 196–glutamate 200 is the Exo I element. Aspartate 198 (exonuclease activity) is an active-site residue. Residues valine 267–arginine 275 carry the Exo II motif. Position 306 (serine 306) interacts with DNA. The interval glycine 318–proline 340 is disordered. An Exo III motif is present at residues tyrosine 395–threonine 403. A disordered region spans residues glutamate 506 to glycine 531. The tract at residues alanine 510 to glycine 571 is accessory-interacting determinant. An RNA-binding site is contributed by arginine 579. Serine 593 contributes to the DNA binding site. RNA is bound by residues histidine 754, glycine 763, and lysine 768. DNA-binding residues include lysine 806 and threonine 849. A trigger loop region spans residues threonine 858–asparagine 864. RNA-binding residues include serine 863 and arginine 869. The short motif at valine 887–leucine 896 is the Pol A element. Positions 890, 891, 893, 895, 943, 947, and 951 each coordinate a 2'-deoxyribonucleoside 5'-triphosphate. Aspartate 890 and valine 891 together coordinate Mg(2+). The Pol B signature appears at arginine 943 to glycine 958. Threonine 1094 and serine 1095 together coordinate DNA. The short motif at histidine 1134–valine 1141 is the Pol C element. Aspartate 1135 contributes to the a 2'-deoxyribonucleoside 5'-triphosphate binding site. Aspartate 1135 is a Mg(2+) binding site.

It belongs to the DNA polymerase type-A family. In terms of assembly, heterotrimer composed of a catalytic subunit and a homodimer of accessory subunits (POLG:POLG2). Interacts with TTC3. Interacts with LIG3. It depends on Mg(2+) as a cofactor.

It localises to the mitochondrion. Its subcellular location is the mitochondrion matrix. The protein resides in the mitochondrion nucleoid. The enzyme catalyses DNA(n) + a 2'-deoxyribonucleoside 5'-triphosphate = DNA(n+1) + diphosphate. It carries out the reaction a 3'-end 2'-deoxyribonucleotidyl-deoxyribonucleotide-DNA + H2O = a 3'-end 2'-deoxyribonucleotide-DNA + a 2'-deoxyribonucleoside 5'-phosphate + H(+). The catalysed reaction is a 5'-end 2'-deoxyribose-2'-deoxyribonucleotide-DNA = (2E,4S)-4-hydroxypenten-2-al-5-phosphate + a 5'-end 5'-phospho-2'-deoxyribonucleoside-DNA + H(+). Inhibited by dideoxynucleotides such as antiviral agent zalcitabine. In terms of biological role, catalytic subunit of DNA polymerase gamma solely responsible for replication of mitochondrial DNA (mtDNA). Replicates both heavy and light strands of the circular mtDNA genome using a single-stranded DNA template, RNA primers and the four deoxyribonucleoside triphosphates as substrates. Has 5' -&gt; 3' polymerase activity. Functionally interacts with TWNK and SSBP1 at the replication fork to form a highly processive replisome, where TWNK unwinds the double-stranded DNA template prior to replication and SSBP1 covers the parental heavy strand to enable continuous replication of the entire mitochondrial genome. A single nucleotide incorporation cycle includes binding of the incoming nucleotide at the insertion site, a phosphodiester bond formation reaction that extends the 3'-end of the primer DNA, and translocation of the primer terminus to the post-insertion site. After completing replication of a mtDNA strand, mediates 3' -&gt; 5' exonucleolytic degradation at the nick to enable proper ligation. Highly accurate due to high nucleotide selectivity and 3' -&gt; 5' exonucleolytic proofreading. Proficiently corrects base substitutions, single-base additions and deletions in non-repetitive sequences and short repeats, but displays lower proofreading activity when replicating longer homopolymeric stretches. Exerts exonuclease activity toward single-stranded DNA and double-stranded DNA containing 3'-terminal mispairs. When a misincorporation occurs, transitions from replication to a pro-nucleolytic editing mode and removes the missincorporated nucleoside in the exonuclease active site. Proceeds via an SN2 nucleolytic mechanism in which Asp-198 catalyzes phosphodiester bond hydrolysis and Glu-200 stabilizes the leaving group. As a result the primer strand becomes one nucleotide shorter and is positioned in the post-insertion site, ready to resume DNA synthesis. Exerts 5'-deoxyribose phosphate (dRP) lyase activity and mediates repair-associated mtDNA synthesis (gap filling) in base-excision repair pathway. Catalyzes the release of the 5'-terminal 2-deoxyribose-5-phosphate sugar moiety from incised apurinic/apyrimidinic (AP) sites to produce a substrate for DNA ligase. The dRP lyase reaction does not require divalent metal ions and likely proceeds via a Schiff base intermediate in a beta-elimination reaction mechanism. The chain is DNA polymerase subunit gamma-1 from Homo sapiens (Human).